The primary structure comprises 307 residues: Opsin-like protein carO (307 aa).

N-linked (GlcNAc...) asparagine glycosylation is present at asparagine 28. Helical transmembrane passes span 36-56 (WYWA…GLGM), 64-84 (IFHY…FTMA), 118-138 (WFLT…MPWP), 140-160 (VLWV…GALV), 166-186 (WGYF…LAWE), 202-222 (FVMC…AWGV), and 235-255 (AVFY…LLLW). A disordered region spans residues 280–307 (GPNNKVASGHGARNDTATASGSNVNPNA). Residue asparagine 293 is glycosylated (N-linked (GlcNAc...) asparagine). A compositionally biased stretch (polar residues) spans 294-307 (DTATASGSNVNPNA).

It belongs to the archaeal/bacterial/fungal opsin family.

It localises to the membrane. Functionally, opsin-like protein; part of the car gene cluster that mediates the biosynthesis of neurosporaxanthin, a carboxylic apocarotenoid acting as an essential protective pigment and leading to orange pigmentation. The exact role of carO in carotenoid biosynthesis is not known yet, but it could be involved in the regulation of the pathway by light or other stimuli. This Fusarium fujikuroi (Bakanae and foot rot disease fungus) protein is Opsin-like protein carO.